We begin with the raw amino-acid sequence, 271 residues long: Formamidopyrimidine-DNA glycosylase (271 aa).

Catalysis depends on Pro2, which acts as the Schiff-base intermediate with DNA. Catalysis depends on Glu3, which acts as the Proton donor. The Proton donor; for beta-elimination activity role is filled by Lys57. DNA-binding residues include His90, Arg109, and Lys150. Residues 235–269 (LVYGNKDKPCPKCGGKIESLIIGQRNSFFCPKCQK) form an FPG-type zinc finger. The active-site Proton donor; for delta-elimination activity is the Arg259.

The protein belongs to the FPG family. In terms of assembly, monomer. It depends on Zn(2+) as a cofactor.

It catalyses the reaction Hydrolysis of DNA containing ring-opened 7-methylguanine residues, releasing 2,6-diamino-4-hydroxy-5-(N-methyl)formamidopyrimidine.. The enzyme catalyses 2'-deoxyribonucleotide-(2'-deoxyribose 5'-phosphate)-2'-deoxyribonucleotide-DNA = a 3'-end 2'-deoxyribonucleotide-(2,3-dehydro-2,3-deoxyribose 5'-phosphate)-DNA + a 5'-end 5'-phospho-2'-deoxyribonucleoside-DNA + H(+). Its function is as follows. Involved in base excision repair of DNA damaged by oxidation or by mutagenic agents. Acts as a DNA glycosylase that recognizes and removes damaged bases. Has a preference for oxidized purines, such as 7,8-dihydro-8-oxoguanine (8-oxoG). Has AP (apurinic/apyrimidinic) lyase activity and introduces nicks in the DNA strand. Cleaves the DNA backbone by beta-delta elimination to generate a single-strand break at the site of the removed base with both 3'- and 5'-phosphates. This Haemophilus influenzae (strain 86-028NP) protein is Formamidopyrimidine-DNA glycosylase.